Consider the following 208-residue polypeptide: Putative chemokine-related protein FP248 (208 aa).

Positions 1-23 (MGTGGSLLCGCSLVLSCLCPSAS) are cleaved as a signal peptide. Asn29 is a glycosylation site (N-linked (GlcNAc...) asparagine).

It localises to the secreted. The sequence is that of Putative chemokine-related protein FP248 from Homo sapiens (Human).